Here is a 113-residue protein sequence, read N- to C-terminus: Sporulation membrane protein YtrH (113 aa).

3 helical membrane-spanning segments follow: residues 16–36 (FIALGVLIGGALIGGLGAYLA), 51–71 (LKIWALVAAIGGTFDAVYSFE), and 86–106 (LLLIISAMGGAQSGWLIISWL).

It localises to the forespore outer membrane. Involved in sporulation. May contribute to cortex formation or stability. This is Sporulation membrane protein YtrH (ytrH) from Bacillus subtilis (strain 168).